The sequence spans 93 residues: uncharacterized protein (93 aa).

A helical membrane pass occupies residues 20 to 40 (VYIYLCFSLMTIALICYLIHI). N-linked (GlcNAc...) asparagine; by host glycosylation occurs at N78.

It belongs to the asfivirus KP93L family.

The protein localises to the host membrane. This is an uncharacterized protein from Ornithodoros (relapsing fever ticks).